Consider the following 402-residue polypeptide: Probable 2,3-bisphosphoglycerate-independent phosphoglycerate mutase (402 aa).

This sequence belongs to the BPG-independent phosphoglycerate mutase family. A-PGAM subfamily.

It catalyses the reaction (2R)-2-phosphoglycerate = (2R)-3-phosphoglycerate. Its pathway is carbohydrate degradation; glycolysis; pyruvate from D-glyceraldehyde 3-phosphate: step 3/5. In terms of biological role, catalyzes the interconversion of 2-phosphoglycerate and 3-phosphoglycerate. This chain is Probable 2,3-bisphosphoglycerate-independent phosphoglycerate mutase, found in Thermosipho africanus (strain TCF52B).